We begin with the raw amino-acid sequence, 184 residues long: ATP synthase subunit b, chloroplastic (184 aa).

The chain crosses the membrane as a helical span at residues leucine 31–leucine 53.

This sequence belongs to the ATPase B chain family. In terms of assembly, F-type ATPases have 2 components, F(1) - the catalytic core - and F(0) - the membrane proton channel. F(1) has five subunits: alpha(3), beta(3), gamma(1), delta(1), epsilon(1). F(0) has four main subunits: a(1), b(1), b'(1) and c(10-14). The alpha and beta chains form an alternating ring which encloses part of the gamma chain. F(1) is attached to F(0) by a central stalk formed by the gamma and epsilon chains, while a peripheral stalk is formed by the delta, b and b' chains.

The protein resides in the plastid. It is found in the chloroplast thylakoid membrane. In terms of biological role, f(1)F(0) ATP synthase produces ATP from ADP in the presence of a proton or sodium gradient. F-type ATPases consist of two structural domains, F(1) containing the extramembraneous catalytic core and F(0) containing the membrane proton channel, linked together by a central stalk and a peripheral stalk. During catalysis, ATP synthesis in the catalytic domain of F(1) is coupled via a rotary mechanism of the central stalk subunits to proton translocation. Functionally, component of the F(0) channel, it forms part of the peripheral stalk, linking F(1) to F(0). In Cycas taitungensis (Prince sago), this protein is ATP synthase subunit b, chloroplastic.